The sequence spans 205 residues: ATP phosphoribosyltransferase (205 aa).

The protein belongs to the ATP phosphoribosyltransferase family. Short subfamily. In terms of assembly, heteromultimer composed of HisG and HisZ subunits.

The protein localises to the cytoplasm. The catalysed reaction is 1-(5-phospho-beta-D-ribosyl)-ATP + diphosphate = 5-phospho-alpha-D-ribose 1-diphosphate + ATP. It functions in the pathway amino-acid biosynthesis; L-histidine biosynthesis; L-histidine from 5-phospho-alpha-D-ribose 1-diphosphate: step 1/9. Catalyzes the condensation of ATP and 5-phosphoribose 1-diphosphate to form N'-(5'-phosphoribosyl)-ATP (PR-ATP). Has a crucial role in the pathway because the rate of histidine biosynthesis seems to be controlled primarily by regulation of HisG enzymatic activity. This is ATP phosphoribosyltransferase from Staphylococcus saprophyticus subsp. saprophyticus (strain ATCC 15305 / DSM 20229 / NCIMB 8711 / NCTC 7292 / S-41).